A 377-amino-acid chain; its full sequence is tRNA(Met) cytidine acetate ligase (377 aa).

ATP-binding positions include 7-20, Gly100, Asn153, and Arg178; that span reads VTEY…HLYH.

This sequence belongs to the TmcAL family.

The protein resides in the cytoplasm. It carries out the reaction cytidine(34) in elongator tRNA(Met) + acetate + ATP = N(4)-acetylcytidine(34) in elongator tRNA(Met) + AMP + diphosphate. Functionally, catalyzes the formation of N(4)-acetylcytidine (ac(4)C) at the wobble position of elongator tRNA(Met), using acetate and ATP as substrates. First activates an acetate ion to form acetyladenylate (Ac-AMP) and then transfers the acetyl group to tRNA to form ac(4)C34. In Staphylococcus saprophyticus subsp. saprophyticus (strain ATCC 15305 / DSM 20229 / NCIMB 8711 / NCTC 7292 / S-41), this protein is tRNA(Met) cytidine acetate ligase.